A 200-amino-acid polypeptide reads, in one-letter code: Lipopolysaccharide core heptose(II)-phosphate phosphatase (200 aa).

Residues 1–25 (MLAFCRSSLKSKKYFIILLALAAIA) form the signal peptide.

Belongs to the phosphoglycerate mutase family. Ais subfamily.

The protein resides in the periplasm. It participates in bacterial outer membrane biogenesis; lipopolysaccharide metabolism. Functionally, catalyzes the dephosphorylation of heptose(II) of the outer membrane lipopolysaccharide core. This chain is Lipopolysaccharide core heptose(II)-phosphate phosphatase, found in Shigella flexneri serotype 5b (strain 8401).